Consider the following 88-residue polypeptide: Class II hydrophobin 5 (88 aa).

A signal peptide spans 1–14 (MQFLVLALASLAAA). Cystine bridges form between cysteine 27/cysteine 73, cysteine 35/cysteine 64, cysteine 36/cysteine 48, and cysteine 74/cysteine 85.

The protein belongs to the cerato-ulmin hydrophobin family. In terms of assembly, homotetramer. Further self-assembles to form highly ordered films at water-air interfaces through intermolecular interactions. Only appears on young aerial hyphae. HCf-5 is the most abundant transcript in sporulating mycelium.

It is found in the secreted. The protein resides in the cell wall. Functionally, aerial growth, conidiation, and dispersal of filamentous fungi in the environment rely upon a capability of their secreting small amphipathic proteins called hydrophobins (HPBs) with low sequence identity. Class I can self-assemble into an outermost layer of rodlet bundles on aerial cell surfaces, conferring cellular hydrophobicity that supports fungal growth, development and dispersal; whereas Class II form highly ordered films at water-air interfaces through intermolecular interactions but contribute nothing to the rodlet structure. This chain is Class II hydrophobin 5, found in Passalora fulva (Tomato leaf mold).